The following is a 190-amino-acid chain: Nuclear transcription factor Y subunit A-7 (190 aa).

Residues 1-33 (MTSSIHELSDNIGSHEKQEQRDSHFQPPIPSAR) form a disordered region. The segment covering 7–24 (ELSDNIGSHEKQEQRDSH) has biased composition (basic and acidic residues). Positions 103–126 (FVNAKQYHGILRRRQSRARLESQN) match the Subunit association domain (SAD) motif. The NFYA/HAP2-type DNA-binding region spans 133-158 (KPYLHESRHLHAIRRPRGCGGRFLNA). The disordered stretch occupies residues 147–190 (RPRGCGGRFLNAKKEDEHHEDSSHEEKSNLSAGKSAMAASSGTS). The segment covering 158–174 (AKKEDEHHEDSSHEEKS) has biased composition (basic and acidic residues). The span at 177–190 (SAGKSAMAASSGTS) shows a compositional bias: low complexity.

It belongs to the NFYA/HAP2 subunit family. Heterotrimeric transcription factor composed of three components, NF-YA, NF-YB and NF-YC. NF-YB and NF-YC must interact and dimerize for NF-YA association and DNA binding.

Its subcellular location is the nucleus. Its function is as follows. Stimulates the transcription of various genes by recognizing and binding to a CCAAT motif in promoters. This is Nuclear transcription factor Y subunit A-7 (NFYA7) from Arabidopsis thaliana (Mouse-ear cress).